A 555-amino-acid chain; its full sequence is Glucose-6-phosphate isomerase (555 aa).

D-glucose 6-phosphate contacts are provided by residues 169–170, 219–224, Gln-364, Glu-368, His-399, and Lys-521; these read GS and SKTFTT. Residue Glu-368 is the Proton donor of the active site. Residues His-399 and Lys-521 contribute to the active site.

It belongs to the GPI family. Homodimer.

The protein localises to the cytoplasm. Its subcellular location is the cytosol. The enzyme catalyses alpha-D-glucose 6-phosphate = beta-D-fructose 6-phosphate. Its pathway is carbohydrate degradation; glycolysis; D-glyceraldehyde 3-phosphate and glycerone phosphate from D-glucose: step 2/4. In the cytoplasm, catalyzes the conversion of glucose-6-phosphate to fructose-6-phosphate, the second step in glycolysis, and the reverse reaction during gluconeogenesis. The polypeptide is Glucose-6-phosphate isomerase (PGI1) (Eremothecium gossypii (strain ATCC 10895 / CBS 109.51 / FGSC 9923 / NRRL Y-1056) (Yeast)).